The sequence spans 176 residues: Translation initiation factor IF-3 (176 aa).

It belongs to the IF-3 family. In terms of assembly, monomer.

Its subcellular location is the cytoplasm. Its function is as follows. IF-3 binds to the 30S ribosomal subunit and shifts the equilibrium between 70S ribosomes and their 50S and 30S subunits in favor of the free subunits, thus enhancing the availability of 30S subunits on which protein synthesis initiation begins. The polypeptide is Translation initiation factor IF-3 (Wolinella succinogenes (strain ATCC 29543 / DSM 1740 / CCUG 13145 / JCM 31913 / LMG 7466 / NCTC 11488 / FDC 602W) (Vibrio succinogenes)).